The primary structure comprises 68 residues: ATP synthase F(0) complex subunit 8 (68 aa).

A helical transmembrane segment spans residues 8-24 (VWPTTITPMLLTLFLIT). The residue at position 54 (lysine 54) is an N6-acetyllysine; alternate. The residue at position 54 (lysine 54) is an N6-succinyllysine; alternate. At lysine 57 the chain carries N6-acetyllysine.

Belongs to the ATPase protein 8 family. In terms of assembly, component of the ATP synthase complex composed at least of ATP5F1A/subunit alpha, ATP5F1B/subunit beta, ATP5MC1/subunit c (homooctomer), MT-ATP6/subunit a, MT-ATP8/subunit 8, ATP5ME/subunit e, ATP5MF/subunit f, ATP5MG/subunit g, ATP5MK/subunit k, ATP5MJ/subunit j, ATP5F1C/subunit gamma, ATP5F1D/subunit delta, ATP5F1E/subunit epsilon, ATP5PF/subunit F6, ATP5PB/subunit b, ATP5PD/subunit d, ATP5PO/subunit OSCP. ATP synthase complex consists of a soluble F(1) head domain (subunits alpha(3) and beta(3)) - the catalytic core - and a membrane F(0) domain - the membrane proton channel (subunits c, a, 8, e, f, g, k and j). These two domains are linked by a central stalk (subunits gamma, delta, and epsilon) rotating inside the F1 region and a stationary peripheral stalk (subunits F6, b, d, and OSCP). Interacts with PRICKLE3.

Its subcellular location is the mitochondrion membrane. Functionally, subunit 8, of the mitochondrial membrane ATP synthase complex (F(1)F(0) ATP synthase or Complex V) that produces ATP from ADP in the presence of a proton gradient across the membrane which is generated by electron transport complexes of the respiratory chain. ATP synthase complex consist of a soluble F(1) head domain - the catalytic core - and a membrane F(1) domain - the membrane proton channel. These two domains are linked by a central stalk rotating inside the F(1) region and a stationary peripheral stalk. During catalysis, ATP synthesis in the catalytic domain of F(1) is coupled via a rotary mechanism of the central stalk subunits to proton translocation. In vivo, can only synthesize ATP although its ATP hydrolase activity can be activated artificially in vitro. Part of the complex F(0) domain. The polypeptide is ATP synthase F(0) complex subunit 8 (Pan paniscus (Pygmy chimpanzee)).